We begin with the raw amino-acid sequence, 530 residues long: MNNARPIRRALISVSDKTGIVEFAQALAERGVDILSTGGTARLLAEQGIAVTEVSDYTGFPEMMDGRVKTLHPKVHGGVLGRRGQDDDVMAKHGINPIDMVVVNLYPFAETVAKDGCTLADAVENIDIGGPTMVRSAAKNHKDVTIVVNASDYDRVIAEMDANDKSLTLETRFDLAIAAFEHTAAYDGMIANYFGTMVPSYGENKEGDEESKFPRTFNQQFEKKQDMRYGENSHQAAAFYVEANPQEASVSTARQIQGKALSYNNIADTDAALECVKEFNEPACVIVKHANPCGVALGKDILEAYNRAYQTDPTSAFGGIIAFNQELDAETASAIVERQFVEVIIAPSVSAEAIEVVAAKKNVRLLECGEWTTKTTGFDVKRVNGGLLVQDRDQGMVSLDDLKVVSKRQPTEEELKDALFCWKVAKYVKSNAIVYAKGDMTIGVGAGQMSRVYSAKIAGIKAADEGLEVAGSVMASDAFFPFRDGIDAAAEAGIKCVIQPGGSMRDDEVIAAADEHGMAMIFTGMRHFRH.

The 148-residue stretch at 1–148 (MNNARPIRRA…KNHKDVTIVV (148 aa)) folds into the MGS-like domain.

This sequence belongs to the PurH family.

It catalyses the reaction (6R)-10-formyltetrahydrofolate + 5-amino-1-(5-phospho-beta-D-ribosyl)imidazole-4-carboxamide = 5-formamido-1-(5-phospho-D-ribosyl)imidazole-4-carboxamide + (6S)-5,6,7,8-tetrahydrofolate. The catalysed reaction is IMP + H2O = 5-formamido-1-(5-phospho-D-ribosyl)imidazole-4-carboxamide. Its pathway is purine metabolism; IMP biosynthesis via de novo pathway; 5-formamido-1-(5-phospho-D-ribosyl)imidazole-4-carboxamide from 5-amino-1-(5-phospho-D-ribosyl)imidazole-4-carboxamide (10-formyl THF route): step 1/1. It functions in the pathway purine metabolism; IMP biosynthesis via de novo pathway; IMP from 5-formamido-1-(5-phospho-D-ribosyl)imidazole-4-carboxamide: step 1/1. The chain is Bifunctional purine biosynthesis protein PurH from Vibrio parahaemolyticus serotype O3:K6 (strain RIMD 2210633).